We begin with the raw amino-acid sequence, 98 residues long: MTMVYANIFLAFTTSLMGLLMYRSHLMSSLLCLEGMMLSLFVMMTVTILNNHFTLASMAPIILLVFAACEAALGLSLLVMVSNTYGTDYVQNLNLLQC.

Helical transmembrane passes span 1–21, 29–49, and 61–81; these read MTMV…GLLM, SLLC…VTIL, and IILL…LVMV.

This sequence belongs to the complex I subunit 4L family. As to quaternary structure, core subunit of respiratory chain NADH dehydrogenase (Complex I) which is composed of 45 different subunits.

The protein localises to the mitochondrion inner membrane. The catalysed reaction is a ubiquinone + NADH + 5 H(+)(in) = a ubiquinol + NAD(+) + 4 H(+)(out). Core subunit of the mitochondrial membrane respiratory chain NADH dehydrogenase (Complex I) which catalyzes electron transfer from NADH through the respiratory chain, using ubiquinone as an electron acceptor. Part of the enzyme membrane arm which is embedded in the lipid bilayer and involved in proton translocation. The sequence is that of NADH-ubiquinone oxidoreductase chain 4L (MT-ND4L) from Neomonachus schauinslandi (Hawaiian monk seal).